The chain runs to 286 residues: Digeranylgeranylglyceryl phosphate synthase (286 aa).

8 consecutive transmembrane segments (helical) span residues 21 to 41, 42 to 62, 96 to 116, 133 to 155, 162 to 181, 214 to 234, 235 to 255, and 266 to 286; these read AVAA…FAVT, TAHV…GNAI, FLFV…IVLA, LPGV…GAAA, FGVV…REII, VLLV…FGIW, YLTL…QAPD, and RGMF…VAGI.

Belongs to the UbiA prenyltransferase family. DGGGP synthase subfamily. Requires Mg(2+) as cofactor.

The protein localises to the cell membrane. It catalyses the reaction sn-3-O-(geranylgeranyl)glycerol 1-phosphate + (2E,6E,10E)-geranylgeranyl diphosphate = 2,3-bis-O-(geranylgeranyl)-sn-glycerol 1-phosphate + diphosphate. Its pathway is membrane lipid metabolism; glycerophospholipid metabolism. Functionally, prenyltransferase that catalyzes the transfer of the geranylgeranyl moiety of geranylgeranyl diphosphate (GGPP) to the C2 hydroxyl of (S)-3-O-geranylgeranylglyceryl phosphate (GGGP). This reaction is the second ether-bond-formation step in the biosynthesis of archaeal membrane lipids. This is Digeranylgeranylglyceryl phosphate synthase from Haloquadratum walsbyi (strain DSM 16790 / HBSQ001).